The primary structure comprises 3183 residues: WD repeat- and FYVE domain-containing protein 4 (3183 aa).

Residues 1 to 15 are compositionally biased toward basic and acidic residues; it reads MEAEDLSKTEDRPED. 4 disordered regions span residues 1–37, 790–811, 938–977, and 1828–1852; these read MEAE…EGQS, AGQE…GKFK, KSLH…QALR, and KETT…HAAE. The span at 1832–1852 shows a compositional bias: low complexity; the sequence is SESSRNTSSPGASAEASHAAE. The 126-residue stretch at 2383 to 2508 folds into the BEACH-type PH domain; sequence LDGEKVSQKV…DRSKALKSFS (126 aa). In terms of domain architecture, BEACH spans 2525–2819; that stretch reads NLRKHPGFDR…QIFTKPHPSR (295 aa). The segment at 2812-2836 is disordered; that stretch reads FTKPHPSRNTTGKNPGPGKDASTPV. WD repeat units follow at residues 2930-2969, 2979-3018, 3021-3060, 3070-3108, and 3150-3183; these read LAAW…GRPR, GHTQ…RVAC, VHRE…ASIT, TCCC…MPVP, and KASP…SADG.

In terms of assembly, interacts with HSP90AB1. As to expression, highly expressed in immune tissues, especially B lymphocytes.

The protein resides in the early endosome. It is found in the endoplasmic reticulum. Functionally, plays a critical role in the regulation of cDC1-mediated cross-presentation of viral and tumor antigens in dendritic cells. Mechanistically, acts near the plasma membrane and interacts with endosomal membranes to promote endosomal-to-cytosol antigen trafficking. Also plays a role in B-cell survival through regulation of autophagy. This Mus musculus (Mouse) protein is WD repeat- and FYVE domain-containing protein 4.